A 255-amino-acid chain; its full sequence is Putative glycyl-radical enzyme activating enzyme MJ1632 (255 aa).

Residues 30 to 245 (SHISLSDKIT…SNVSCSLDFK (216 aa)) form the Radical SAM core domain. Cys45, Cys49, and Cys52 together coordinate [4Fe-4S] cluster. S-adenosyl-L-methionine contacts are provided by residues 51–53 (YCF), Gly88, and 134–136 (DLK).

Belongs to the organic radical-activating enzymes family. [4Fe-4S] cluster is required as a cofactor.

It catalyses the reaction glycyl-[protein] + reduced [flavodoxin] + S-adenosyl-L-methionine = glycin-2-yl radical-[protein] + semiquinone [flavodoxin] + 5'-deoxyadenosine + L-methionine + H(+). This Methanocaldococcus jannaschii (strain ATCC 43067 / DSM 2661 / JAL-1 / JCM 10045 / NBRC 100440) (Methanococcus jannaschii) protein is Putative glycyl-radical enzyme activating enzyme MJ1632.